Reading from the N-terminus, the 754-residue chain is Probable TonB-dependent siderophore receptor PirA (754 aa).

Residues 1–24 form the signal peptide; the sequence is MSKRIIQSVLSVSVLASMMSMAFA. The 128-residue stretch at 54 to 181 folds into the TBDR plug domain; the sequence is EQVKQSLGVS…AGGVVNIITK (128 aa). The 569-residue stretch at 186-754 folds into the TBDR beta-barrel domain; that stretch reads ETHGSVEFYT…AYYASLKYSF (569 aa). A compositionally biased stretch (polar residues) spans 404 to 414; that stretch reads VSTTQGKDSSG. Positions 404 to 424 are disordered; sequence VSTTQGKDSSGSGYGDQLAKG. Cys511 and Cys519 form a disulfide bridge. Residues 737 to 754 carry the TonB C-terminal box motif; sequence QTYNEPGRAYYASLKYSF.

Belongs to the TonB-dependent receptor family.

It is found in the cell outer membrane. Probably involved in the initial step of iron uptake by binding iron chelating siderophores, thereby allowing extraction of iron from the environment. May bind the siderophore, ferric enterobactin, with micromolar affinity. In Acinetobacter baumannii (strain ATCC 19606 / DSM 30007 / JCM 6841 / CCUG 19606 / CIP 70.34 / NBRC 109757 / NCIMB 12457 / NCTC 12156 / 81), this protein is Probable TonB-dependent siderophore receptor PirA.